Here is a 107-residue protein sequence, read N- to C-terminus: Protein phosphatase 1 regulatory subunit INH3 (107 aa).

Positions 1–14 (MSTATRPSSSATTS) are enriched in low complexity. Disordered stretches follow at residues 1–40 (MSTATRPSSSATTSVILENPVSQSQPTERLVLRLNRKKKK) and 69–107 (PFDEDDSEEEDDNNHHCDHNHEHSESGEASSSNDSKAVD). Acidic residues predominate over residues 71–80 (DEDDSEEEDD). Residues 81–94 (NNHHCDHNHEHSES) are compositionally biased toward basic and acidic residues. Low complexity predominate over residues 95 to 107 (GEASSSNDSKAVD).

Interacts with protein phosphatase 1. In terms of tissue distribution, expressed in roots, cotyledons, leaves, flowers and embryos.

Its function is as follows. Inhibitor of protein-phosphatase 1 (PP1). Binds to and inhibits PP1 activity. Required for early embryogenesis progression. This Arabidopsis thaliana (Mouse-ear cress) protein is Protein phosphatase 1 regulatory subunit INH3.